The following is a 334-amino-acid chain: snRNA-activating protein complex subunit 2 (334 aa).

Disordered stretches follow at residues 137-200 (LHSK…STEE) and 271-306 (AGGS…ELKS). Residues 167 to 180 (IPSSAPAAPSSAPR) are compositionally biased toward low complexity.

As to quaternary structure, part of the SNAPc complex composed of 5 subunits: SNAPC1, SNAPC2, SNAPC3, SNAPC4 and SNAPC5. SNAPC2 interacts with TBP and SNAPC4.

It localises to the nucleus. In terms of biological role, part of the SNAPc complex required for the transcription of both RNA polymerase II and III small-nuclear RNA genes. Binds to the proximal sequence element (PSE), a non-TATA-box basal promoter element common to these 2 types of genes. Recruits TBP and BRF2 to the U6 snRNA TATA box. This chain is snRNA-activating protein complex subunit 2 (SNAPC2), found in Homo sapiens (Human).